Here is a 269-residue protein sequence, read N- to C-terminus: Hydroxyethylthiazole kinase (269 aa).

Methionine 41 contributes to the substrate binding site. Positions 117 and 165 each coordinate ATP. Position 192 (glycine 192) interacts with substrate.

This sequence belongs to the Thz kinase family. Mg(2+) is required as a cofactor.

It catalyses the reaction 5-(2-hydroxyethyl)-4-methylthiazole + ATP = 4-methyl-5-(2-phosphooxyethyl)-thiazole + ADP + H(+). The protein operates within cofactor biosynthesis; thiamine diphosphate biosynthesis; 4-methyl-5-(2-phosphoethyl)-thiazole from 5-(2-hydroxyethyl)-4-methylthiazole: step 1/1. Catalyzes the phosphorylation of the hydroxyl group of 4-methyl-5-beta-hydroxyethylthiazole (THZ). The sequence is that of Hydroxyethylthiazole kinase from Actinobacillus succinogenes (strain ATCC 55618 / DSM 22257 / CCUG 43843 / 130Z).